Consider the following 56-residue polypeptide: MAVQQNKKSRSRRDMRRSHDALTTAAVSVDKTTGETHLRHHVTADGYYRGRKVINK.

The tract at residues 1–37 (MAVQQNKKSRSRRDMRRSHDALTTAAVSVDKTTGETH) is disordered. Residues 7 to 16 (KKSRSRRDMR) show a composition bias toward basic residues.

Belongs to the bacterial ribosomal protein bL32 family.

The chain is Large ribosomal subunit protein bL32 from Haemophilus ducreyi (strain 35000HP / ATCC 700724).